Reading from the N-terminus, the 201-residue chain is Peptidyl-tRNA hydrolase (201 aa).

Y15 provides a ligand contact to tRNA. The active-site Proton acceptor is the H20. Residues Y66, N68, and N114 each coordinate tRNA.

This sequence belongs to the PTH family. As to quaternary structure, monomer.

It localises to the cytoplasm. The catalysed reaction is an N-acyl-L-alpha-aminoacyl-tRNA + H2O = an N-acyl-L-amino acid + a tRNA + H(+). In terms of biological role, hydrolyzes ribosome-free peptidyl-tRNAs (with 1 or more amino acids incorporated), which drop off the ribosome during protein synthesis, or as a result of ribosome stalling. Catalyzes the release of premature peptidyl moieties from peptidyl-tRNA molecules trapped in stalled 50S ribosomal subunits, and thus maintains levels of free tRNAs and 50S ribosomes. This chain is Peptidyl-tRNA hydrolase, found in Burkholderia mallei (strain NCTC 10247).